A 775-amino-acid polypeptide reads, in one-letter code: MSDKDRIAQLLRELEEAKAREEEAKARAEEAKARAEEAKARAEEAKAREEEAKAREAQERCERERLQLEHRNTTFLEYLHNCHRHLYNALRLTNTSRYSTGYTKVVGKYYPKRLRPWTYFANVLHPHYFDLVQSICGQRQLFEPANTTKSLGTIISDHLAGNEKAIDRFEVDAVERPVQGILKVLATHKEAGKASICPEFRFSANLRELTQKDDGSSGADDNTSDGSLERRQQAGPNKRPTSKRKYICSNRQPDGVGIRMQPGGGQTHAFIYDYKAAHKVAIEYIRSATAKEHLFHEVVARINDDKLSRDEEVQRREQAEALIAMALTQVFDYMITYGVSYGYVAAGRCLLLLYVDRDDWQTLYCHPCLPADDVGEPTNDWTDRLSHTAVAQLISFCLSSFQSEALEGQSLETALSIAKATLKTWSESYADVAYLGLEPAELSSAPSSQNTDISEYTSKAEPTGRNVALRSQSSCKPAAVLPQSNEHDDEEDHSEPGASRLRLAANKRKRGPSSGGEDGDIAMADSGPTKQYCTQACLLGLKRGKDLDEKCPNVSLHRFDGSSRHPVNAHRFTDMVEQQLLLSPYKGCRMVDFWGKRGAMGWLFKLELLPYGYTFVGKGTLEDRLSRLEHEGRVYAQLDHLQGDVVPVYLGLVRLDRGYILPGLEFVVHMMLMSWAGQTPSASMDDAETLKRESLTAIWNEGVVHGDENRANYLWNAERGRIMIIDFDRAHLSPPPKPRAVSRLSKPKRKRGDSEADAQLFGPLEINRSKHRIRT.

Residues 4 to 69 adopt a coiled-coil conformation; that stretch reads KDRIAQLLRE…RCERERLQLE (66 aa). 4 disordered regions span residues 18–51, 211–249, 442–525, and 734–761; these read KARE…REEE, QKDD…YICS, LSSA…AMAD, and PPPK…AQLF. Over residues 444-457 the composition is skewed to polar residues; sequence SAPSSQNTDISEYT.

Its subcellular location is the cytoplasm. It is found in the nucleus. In terms of biological role, promotes unequal transmission of alleles from the parental zygote to progeny spores by acting as poison/antidote system, leading to poisoning of progeny that do not inherit the allele. May possess DNA nuclease activity that leads to spore killing, and a kinase activity that confers resistance to the nuclease activity. In Podospora anserina (strain S / ATCC MYA-4624 / DSM 980 / FGSC 10383) (Pleurage anserina), this protein is Meiotic driver SPOK2.